Consider the following 74-residue polypeptide: MEIKYLLTVFLVLLIVSDHCQAFLFSLIPNAISGLLSAFKGRRKRNLDGQIDRFRNFRKRDAELEELLSKLPIY.

Residues 1-22 (MEIKYLLTVFLVLLIVSDHCQA) form the signal peptide. Lysine 40 is modified (lysine amide). The propeptide occupies 46–74 (NLDGQIDRFRNFRKRDAELEELLSKLPIY).

Belongs to the non-disulfide-bridged peptide (NDBP) superfamily. Short antimicrobial peptide (group 4) family. In terms of tissue distribution, expressed by the venom gland.

It localises to the secreted. The protein resides in the target cell membrane. Has antimicrobial activity against the Gram-positive bacteria S.aureus (MIC=8 uM) and the yeast C.albicans (MIC=16 uM). Causes hemolysis on horse erythrocytes (64 uM for 100% hemolysis). Minimum bactericidal concentrations have also been tested against S.aureus and is four-fold higher (MBC=32 uM). The sequence is that of Antimicrobial peptide AcrAP2 from Androctonus crassicauda (Arabian fat-tailed scorpion).